A 729-amino-acid chain; its full sequence is DNA topoisomerase 3 (729 aa).

The Toprim domain maps to 3–136 (KSVVIAEKPS…IKRLWISSVT (134 aa)). Residues Glu9 and Asp105 each coordinate Mg(2+). Residues 153 to 594 (YDNLYASAVA…EMKNYTKEIV (442 aa)) enclose the Topo IA-type catalytic domain. The segment at 187-192 (NCGRVQ) is interaction with DNA. Residue Tyr310 is the O-(5'-phospho-DNA)-tyrosine intermediate of the active site. Over residues 686 to 713 (ERRKKESGNKADKRDVQKYMKQQKKEEE) the composition is skewed to basic and acidic residues. Residues 686–718 (ERRKKESGNKADKRDVQKYMKQQKKEEEPLNNP) are disordered.

The protein belongs to the type IA topoisomerase family. Mg(2+) serves as cofactor.

The catalysed reaction is ATP-independent breakage of single-stranded DNA, followed by passage and rejoining.. In terms of biological role, releases the supercoiling and torsional tension of DNA, which is introduced during the DNA replication and transcription, by transiently cleaving and rejoining one strand of the DNA duplex. Introduces a single-strand break via transesterification at a target site in duplex DNA. The scissile phosphodiester is attacked by the catalytic tyrosine of the enzyme, resulting in the formation of a DNA-(5'-phosphotyrosyl)-enzyme intermediate and the expulsion of a 3'-OH DNA strand. The free DNA strand then undergoes passage around the unbroken strand, thus removing DNA supercoils. Finally, in the religation step, the DNA 3'-OH attacks the covalent intermediate to expel the active-site tyrosine and restore the DNA phosphodiester backbone. In Bacillus thuringiensis subsp. konkukian (strain 97-27), this protein is DNA topoisomerase 3.